The sequence spans 257 residues: Type III pantothenate kinase (257 aa).

ATP is bound at residue 6 to 13 (DVGNTSTK). 109 to 112 (GADR) contributes to the substrate binding site. The active-site Proton acceptor is the D111. Residue D132 coordinates K(+). ATP is bound at residue T135. T187 contributes to the substrate binding site.

This sequence belongs to the type III pantothenate kinase family. In terms of assembly, homodimer. It depends on NH4(+) as a cofactor. The cofactor is K(+).

It is found in the cytoplasm. The catalysed reaction is (R)-pantothenate + ATP = (R)-4'-phosphopantothenate + ADP + H(+). Its pathway is cofactor biosynthesis; coenzyme A biosynthesis; CoA from (R)-pantothenate: step 1/5. Catalyzes the phosphorylation of pantothenate (Pan), the first step in CoA biosynthesis. The polypeptide is Type III pantothenate kinase (Anaplasma marginale (strain St. Maries)).